Reading from the N-terminus, the 181-residue chain is Virion protein 3 (181 aa).

Belongs to the tevenvirinae baseplate structural protein gp8 family.

Its subcellular location is the virion. Functionally, putative baseplate protein. In Enterococcus faecalis (Streptococcus faecalis), this protein is Virion protein 3.